The primary structure comprises 480 residues: LETM1 domain-containing protein LETM2, mitochondrial (480 aa).

The transit peptide at 1-25 (MAFYSYNSFLAIFWTRLPGHSVYPS) directs the protein to the mitochondrion. The Mitochondrial intermembrane segment spans residues 26-175 (CSHFPSLAFL…LLRTCADVFR (150 aa)). The interval 88-118 (GKPQLEQTGKPKAASPQPTKEAKTETTEEKR) is disordered. The span at 107-118 (KEAKTETTEEKR) shows a compositional bias: basic and acidic residues. The chain crosses the membrane as a helical span at residues 176-196 (LVPFMVFIIVPFMEFLIPVFL). Residues 197–480 (KLFPDMLPST…QNSKADSKGA (284 aa)) are Mitochondrial matrix-facing. Residues 219 to 436 (KTMAAKLEIA…SAPQLKGTKD (218 aa)) enclose the Letm1 RBD domain. Residues 398 to 444 (ELPPNIETPKPNLGIPTPPPPESKENLTDSAPQLKGTKDEEFIQLPP) form a disordered region.

The protein resides in the mitochondrion inner membrane. This chain is LETM1 domain-containing protein LETM2, mitochondrial (Letm2), found in Mus musculus (Mouse).